The primary structure comprises 62 residues: Delta-theraphotoxin-Cg1a 3 (62 aa).

Residues 1-21 form the signal peptide; the sequence is MKTSILFVIFSLALVFALSPA. The propeptide occupies 22 to 29; sequence TEIEETDR. Cystine bridges form between C31–C46, C38–C51, and C45–C58.

Belongs to the neurotoxin 10 (Hwtx-1) family. 33 (Jztx-1) subfamily. Expressed by the venom gland.

The protein localises to the secreted. Functionally, moderately inhibits voltage-gated sodium channels and weakly inhibits voltage-gated potassium channel. Inhibits the inactivation of rat Nav1.2/SCN2A (IC(50)=870 nM), rat Nav1.3/SCN3A (IC(50)=845 nM), rat Nav1.4/SCN4A (IC(50)=339 nM), human Nav1.5/SCN5A (IC(50)=335 nM) and human Nav1.7/SCN9A sodium channels (IC(50)=348 nM). The toxin delays the inactivation of sodium channels without affecting the activation and steady-state inactivation kinetics in the physiological range of voltages. Site-directed mutagenesis of the sodium channel indicates that the toxin interacts with site 3 located at the extracellular S3-S4 linker of domain IV. On potassium channels, it inhibits activation of channels with an IC(50) of 8.05 uM through a voltage sensor-trapping mechanism. It increases muscle contraction in several assays (mouse phrenic nerve-diaphragm, toad heart, rat vas deferens) and is suggested to act both presynaptically and postsynaptically. The protein is Delta-theraphotoxin-Cg1a 3 of Chilobrachys guangxiensis (Chinese earth tiger tarantula).